A 133-amino-acid chain; its full sequence is Large ribosomal subunit protein uL15 (133 aa).

Residues 1 to 62 (MALHNLQPAP…GQQPLQRRLP (62 aa)) are disordered. Over residues 32–45 (TRGQKGQKSRTGYS) the composition is skewed to polar residues.

Belongs to the universal ribosomal protein uL15 family. In terms of assembly, part of the 50S ribosomal subunit.

Binds to the 23S rRNA. This chain is Large ribosomal subunit protein uL15, found in Nitratiruptor sp. (strain SB155-2).